A 434-amino-acid chain; its full sequence is Serine--tRNA ligase (434 aa).

Position 230–232 (230–232) interacts with L-serine; it reads TSE. ATP contacts are provided by residues 261–263 and valine 277; that span reads RRE. L-serine is bound at residue glutamate 284. 348–351 lines the ATP pocket; that stretch reads ELTS. Threonine 393 contributes to the L-serine binding site.

The protein belongs to the class-II aminoacyl-tRNA synthetase family. Type-1 seryl-tRNA synthetase subfamily. As to quaternary structure, homodimer. The tRNA molecule binds across the dimer.

The protein localises to the cytoplasm. The catalysed reaction is tRNA(Ser) + L-serine + ATP = L-seryl-tRNA(Ser) + AMP + diphosphate + H(+). The enzyme catalyses tRNA(Sec) + L-serine + ATP = L-seryl-tRNA(Sec) + AMP + diphosphate + H(+). The protein operates within aminoacyl-tRNA biosynthesis; selenocysteinyl-tRNA(Sec) biosynthesis; L-seryl-tRNA(Sec) from L-serine and tRNA(Sec): step 1/1. Its function is as follows. Catalyzes the attachment of serine to tRNA(Ser). Is also able to aminoacylate tRNA(Sec) with serine, to form the misacylated tRNA L-seryl-tRNA(Sec), which will be further converted into selenocysteinyl-tRNA(Sec). This is Serine--tRNA ligase from Kocuria rhizophila (strain ATCC 9341 / DSM 348 / NBRC 103217 / DC2201).